The primary structure comprises 222 residues: Cytidylate kinase (222 aa).

Residue 7-15 (GPAGAGKST) coordinates ATP.

Belongs to the cytidylate kinase family. Type 1 subfamily.

It localises to the cytoplasm. It carries out the reaction CMP + ATP = CDP + ADP. The enzyme catalyses dCMP + ATP = dCDP + ADP. This is Cytidylate kinase from Carboxydothermus hydrogenoformans (strain ATCC BAA-161 / DSM 6008 / Z-2901).